Here is a 615-residue protein sequence, read N- to C-terminus: 1-deoxy-D-xylulose-5-phosphate synthase (615 aa).

Residues His72 and 111 to 113 (GHS) contribute to the thiamine diphosphate site. Asp142 is a Mg(2+) binding site. Thiamine diphosphate is bound by residues 143–144 (GA), Asn171, Tyr278, and Glu360. Residue Asn171 coordinates Mg(2+).

This sequence belongs to the transketolase family. DXPS subfamily. As to quaternary structure, homodimer. Requires Mg(2+) as cofactor. The cofactor is thiamine diphosphate.

The enzyme catalyses D-glyceraldehyde 3-phosphate + pyruvate + H(+) = 1-deoxy-D-xylulose 5-phosphate + CO2. The protein operates within metabolic intermediate biosynthesis; 1-deoxy-D-xylulose 5-phosphate biosynthesis; 1-deoxy-D-xylulose 5-phosphate from D-glyceraldehyde 3-phosphate and pyruvate: step 1/1. Its function is as follows. Catalyzes the acyloin condensation reaction between C atoms 2 and 3 of pyruvate and glyceraldehyde 3-phosphate to yield 1-deoxy-D-xylulose-5-phosphate (DXP). This is 1-deoxy-D-xylulose-5-phosphate synthase from Campylobacter jejuni subsp. doylei (strain ATCC BAA-1458 / RM4099 / 269.97).